A 3401-amino-acid chain; its full sequence is MPVRPRNKPKGVNVMAAGKVAQKIKNKLKSKAKAIGNISKGLRGFILFILAQIFWARKLTPRVRTMWKKVDKAKATRVLKGIRNIATQLITGLAGRKKRRSMTHGIILSLGVTMVIGASLHHHGGRYLLNVTHADLGKTFTIGSGNCTANIVEAGSWCSDSMEYECVTLAEAEEPDDIDCWCRGVERVRVTYGRCKNGLDSRRSRRAAVITAHIDKGLTTRQEKWLSTSMGERQIQRIERWMMRNPFYAAISLLLAWWVGSDIKQKVLIAFLVLAIGPAYSTHCVGIPKRDFVQGVQGNTWVNLVLDQGSCVTLSSDNKPSVDIWLDSIFISSPVLVRRVSHTATISDTKVQTACPTNGEAKLEEEASAEYECKKTYSDRGWGNGCGLFGKGSIVACAKYTSTGHMDVYEIDSTKIEYVTKAQVHAGMKHDDTTMVKEVKFEPTTGSMDVEFTGYGTLGLECHVQTMVDMANYYLVVMGQEAWLVHKQWVEDITLPWKIGEGGFWRDKHYMVEFTEPHATTMTVMVLGAQEGALRTALAGAMVVTYTDSSGTKKFSLKGGHVSCKARMNGLVLKGSTYTMCKGGFSFVKTPTDTGHGTAVMQVKVSKGTPCRIPVQAVDSSNGGTNRATLITANPIAATTEDEVMIELSPPYGESYIMIGTGDDKLTYHWHKSGSTIGSLFTETYKGAQRMAIIGDDAWDFSSSSNFFNSIGKALHTVFGNVFHSIFGGLSWITKIILGGMFLWLGVNSRNQTMCMVLMAVGGILLFMTLGVSGEVGCSLDIKRRELKCGDGLFLFNDVNDWTHKYKFHPEDPKLLASLIKKSHQEGRCGLSSVNEVEHRMWNSIKTEINAMFEENGVDLSVVVKDSKLHYKMGSHAFPKVEEGLSLGWKNWGKSLVFEPKQSNVSFIIDGTSEDCPFTNRIWNAFVVEEFGIGMFTTNVFLTHKVDFTKQCDASLLGAGVKGDVAVHGDPTLWMESRKENGTWQLHTIQMNGLRECFWPQTHTIHGSSVMESAMFLPKQYGGPVSHHNHYTGYAVQTAGPWNVQPLIVKRETCPGTQVRVDEQCRDRGNSVRSTTSEGKIIPEWCCRSCTLPPVSFWGPDSCWYAMEIRPQNVHEEHLVRSWASAGTGMAESSLGLVALFLFTDIFARKRMTRKFMVIGCLGVLSVMIVGGFTALDLIRYIIVVGQHFASMNHGGDVAYLAIIAVGKLRPGLLMMYSFKAAWSPKERVMVALGLLVFQAVLGDFVHTGLWEWADAAGMCILIIQGMATRKEKTYIMPILALLTPLSMEIIRKTGIFACVGLLGLSLWRGGDTTMRKGMPLLAGAATAASGLTRASLSVVFILCATAASRRSWPIGEIMAIVGIVGTGFGMAVNDQASLAGPMLVFGLIMIVYATLGRADGLTLKRVGDITWEEEAVHSGSSTRYDVTLNEAGEFKLVHEEPVVWSHVVFLVVALIAASVHPIALVVVTIIWTYGKKHLRGGVLWDIPIAPPVEEAEPLEDGVYAILQSGLMGKAQAGVGVAQEGVFHTMWHVTRGGFLMVGGKRLTPHWASVKRDLICYGGNWKLDGKWDGVEEVQLIAVAPGKAPTNVQTKPGVFRMADGTEIGAVALDYPSGTSGSPIVNEKGQVIGLYGNGIVIGGSGYVSSIAQIAGGEGVTEEPLLDTATMLRKGKLTVLDYHPGAGKTRIFLPYILKECVRRKLRTLVLAPTRVVLSEMREALRDVAVKYHTQAFQAAGTGRELVDAMCHATLSHRMLESSRSVNWEVIIMDEAHYMDPTSIAARGWAAHKANNHESAVIFMTATPPGSANEFPESNGEIEDLRRDIPTEPWNKGHEWILEDRRPTVWFLPSIRAANNIAACLRRSERSVVVLNRQTFETVYPTIKTKKPDFILATDIAEMGANLGVERVIDCRTSYKPVLTTDGRVVIKGPLRIPASAAAQRRGRVGRCKDRDTDSYVYSEETSEDNGHYVCWTEASMLLDNMEVKGGMVAPLYDVEAQKTEMVPGEARLRDDQRKVFRTLIKRYDLPVWVSWQVAKSGLMLEDRKWCFDGDDENTILNDNGEKILARSPGGQRKFLCPRWNDSRLYYDNASLMSFLAFAEGRRSYLGVWHAVQMAPLKLGEKLTESLDTMVMLMRSEEGTRAYKLASTNAPEAVTILLMTGIVVACTLGVGLAFMWPKGVDKMSMGMITMSIAGYLMLQGGLTPVQVASVLLIFFIFMVVLIPEAGTQRSINDNKTLYVLLGVALLIGAITANEMGYLEKTKRDLLGERVQNEWKLELPMFDLRPGAAWSIYVGLATLVMPVLDHWIRTEYGSLSLTGIAQQASILQAMDKGVPFFKLNMSVIVLLVSVWNNFSMLSVLCGVGLLGVHCAFVLPGLRAQAAKQAQRRVYHGVAKNPVVDGQTTAEIETAPEMPPLYEKKLALVLLGVVAIANGVMVRSAFSMAETVVLLSAAVGPLLEGNTSAIWNGPMAVAMAGIMRGNYYAGIGLAYNLWILQSPKRGRSTTMTLGELWKRQLNLMGKREFELYKITDIHEVDRSQAQAVMKAGIDNVGISVSRGTSKLKWMVDRNYVEPLGRVVDLGCGRGGWSYLCAASKRVSSVKAYTLGITGHEKPVNVQSLGWNIIKFKDKTDVFKMEPHACETLLCDIGESSSNPLVEMERTLKVIDNVERWMSPTTESYCFKVLAPYRPEVIERLERFQLKYGGGIVRVPFSRNSTHEMYYVSGVKNNLTHMVSCVSRLLLRRMTHPDGRCKVEADVVFPTGTRNVASDLGPMDLSKVKDRVNRLRSEQGTWFQDDSHPYRTWHYLGSYVAKQSGSAATMVNGVVKMLSMPWDRIENVTQLAMTDTTPYGQQRVFKEKVDTRAPPPPPGTRAIMEVVNKWMFDFLAREKAPRICTKEEFINKVRSNAALGNMLEEQDGWKDAATAVQDPRFWALVDRERQVHLEGRCETCIYNMMGKREKKPAEFGKAKGSRAIWYMWLGARFLEFEALGFLNEDHWFGRENSLAGVEGVGLQYLGYVVKNVWEKSNGIMYADDTAGWDTRVTEADLDDEQYLLSKMEGYHKKLASAVMNMTYKYKVVKVPRPGPGGKVFMDVIARQDQRGSGQVVTYPLNTGTNMKVQLIRMAEGEGVISRHDIERVTIKTLNALRVWLAENGAERLSRMAVSGDDCVVAPLDERFGLALHHLNAMSKIRKDIDDWTESIPWRSWESVPFCSHHFHQLFLKDGRSIVVPCRDQDELVGRARVSPGNGWKLKETACLSKAYAQMWLLMYFHKRDLRLMGNAICSSVPAHWVPTGRTTWSIHAHNEWISSERMLDVWNKVWIVDNPHMPDKTCIDDWRDVPYLPKSQDRLCGSLIGITARASWAENIRAVVNKIRGMIGNEVYSDHLSVMGRYTYSVQEVGTVL.

The Cytoplasmic portion of the chain corresponds to 1–104 (MPVRPRNKPK…GRKKRRSMTH (104 aa)). Residues 101–117 (SMTHGIILSLGVTMVIG) constitute a propeptide, ER anchor for the capsid protein C, removed in mature form by serine protease NS3. A helical transmembrane segment spans residues 105–125 (GIILSLGVTMVIGASLHHHGG). The Extracellular portion of the chain corresponds to 126-240 (RYLLNVTHAD…GERQIQRIER (115 aa)). N130 and N146 each carry an N-linked (GlcNAc...) asparagine; by host glycan. A helical transmembrane segment spans residues 241 to 261 (WMMRNPFYAAISLLLAWWVGS). Residues 262–266 (DIKQK) are Cytoplasmic-facing. The helical transmembrane segment at 267–281 (VLIAFLVLAIGPAYS) threads the bilayer. Topologically, residues 282-725 (THCVGIPKRD…HTVFGNVFHS (444 aa)) are extracellular. Cystine bridges form between C284/C311, C355/C386, C373/C397, C462/C564, and C581/C611. The segment at 379–392 (DRGWGNGCGLFGKG) is fusion peptide. Residues 726–746 (IFGGLSWITKIILGGMFLWLG) traverse the membrane as a helical segment. Residues 747 to 753 (VNSRNQT) lie on the Extracellular side of the membrane. A helical transmembrane segment spans residues 754-774 (MCMVLMAVGGILLFMTLGVSG). At 775-1122 (EVGCSLDIKR…NVHEEHLVRS (348 aa)) the chain is on the extracellular side. 6 cysteine pairs are disulfide-bonded: C778/C789, C829/C916, C952/C997, C1054/C1103, C1065/C1087, and C1086/C1090. Residues N904 and N981 are each glycosylated (N-linked (GlcNAc...) asparagine; by host). The helical transmembrane segment at 1123-1143 (WASAGTGMAESSLGLVALFLF) threads the bilayer. The Cytoplasmic portion of the chain corresponds to 1144-1198 (TDIFARKRMTRKFMVIGCLGVLSVMIVGGFTALDLIRYIIVVGQHFASMNHGGDV). A helical transmembrane segment spans residues 1199-1219 (AYLAIIAVGKLRPGLLMMYSF). Residues 1220–1287 (KAAWSPKERV…PILALLTPLS (68 aa)) lie on the Lumenal side of the membrane. A helical transmembrane segment spans residues 1288–1308 (MEIIRKTGIFACVGLLGLSLW). Residues 1309 to 1352 (RGGDTTMRKGMPLLAGAATAASGLTRASLSVVFILCATAASRRS) are Cytoplasmic-facing. Residues 1353-1373 (WPIGEIMAIVGIVGTGFGMAV) traverse the membrane as a helical segment. Residues 1374–1376 (NDQ) are Lumenal-facing. Residues 1377–1397 (ASLAGPMLVFGLIMIVYATLG) form a helical membrane-spanning segment. Over 1398 to 1447 (RADGLTLKRVGDITWEEEAVHSGSSTRYDVTLNEAGEFKLVHEEPVVWSH) the chain is Cytoplasmic. The interval 1404 to 1443 (LKRVGDITWEEEAVHSGSSTRYDVTLNEAGEFKLVHEEPV) is interacts with and activates NS3 protease. An intramembrane region (helical) is located at residues 1448–1468 (VVFLVVALIAASVHPIALVVV). Topologically, residues 1469 to 2154 (TIIWTYGKKH…ASTNAPEAVT (686 aa)) are cytoplasmic. One can recognise a Peptidase S7 domain in the interval 1481–1661 (GGVLWDIPIA…GGEGVTEEPL (181 aa)). Residues H1532, D1556, and S1617 each act as charge relay system; for serine protease NS3 activity in the active site. Residues 1665–1821 (ATMLRKGKLT…ESNGEIEDLR (157 aa)) enclose the Helicase ATP-binding domain. The interval 1669–1672 (RKGK) is important for RNA-binding. 1678-1685 (YHPGAGKT) contacts ATP. The DEAH box motif lies at 1769–1772 (DEAH). A Helicase C-terminal domain is found at 1816–1995 (EIEDLRRDIP…GMVAPLYDVE (180 aa)). A helical membrane pass occupies residues 2155–2175 (ILLMTGIVVACTLGVGLAFMW). The Lumenal portion of the chain corresponds to 2176–2181 (PKGVDK). The segment at residues 2182–2200 (MSMGMITMSIAGYLMLQGG) is an intramembrane region (helical). Residue L2201 is a topological domain, lumenal. The helical transmembrane segment at 2202 to 2222 (TPVQVASVLLIFFIFMVVLIP) threads the bilayer. Residues 2223–2235 (EAGTQRSINDNKT) lie on the Cytoplasmic side of the membrane. The helical transmembrane segment at 2236 to 2250 (LYVLLGVALLIGAIT) threads the bilayer. Residues 2251–2285 (ANEMGYLEKTKRDLLGERVQNEWKLELPMFDLRPG) lie on the Cytoplasmic side of the membrane. The helical intramembrane region spans 2286–2306 (AAWSIYVGLATLVMPVLDHWI). Residues 2307 to 2354 (RTEYGSLSLTGIAQQASILQAMDKGVPFFKLNMSVIVLLVSVWNNFSM) are Lumenal-facing. Residues 2355-2375 (LSVLCGVGLLGVHCAFVLPGL) traverse the membrane as a helical segment. The Cytoplasmic portion of the chain corresponds to 2376–2418 (RAQAAKQAQRRVYHGVAKNPVVDGQTTAEIETAPEMPPLYEKK). Residues 2419–2439 (LALVLLGVVAIANGVMVRSAF) traverse the membrane as a helical segment. At 2440-2467 (SMAETVVLLSAAVGPLLEGNTSAIWNGP) the chain is on the lumenal side. Residues 2468–2488 (MAVAMAGIMRGNYYAGIGLAY) traverse the membrane as a helical segment. The Cytoplasmic segment spans residues 2489 to 3401 (NLWILQSPKR…YSVQEVGTVL (913 aa)). The 265-residue stretch at 2499–2763 (GRSTTMTLGE…DVVFPTGTRN (265 aa)) folds into the mRNA cap 0-1 NS5-type MT domain. S2554 lines the S-adenosyl-L-methionine pocket. S2554 carries the phosphoserine modification. K2559 acts as the For 2'-O-MTase activity in catalysis. S-adenosyl-L-methionine contacts are provided by G2584, W2585, T2602, L2603, D2629, and V2630. The active-site For 2'-O-MTase activity is D2644. Residue I2645 coordinates S-adenosyl-L-methionine. Residues K2680 and E2716 each act as for 2'-O-MTase activity in the active site. Y2718 serves as a coordination point for S-adenosyl-L-methionine. A Nuclear localization signal motif is present at residues 2869–2902 (RAIMEVVNKWMFDFLAREKAPRICTKEEFINKVR). Residues E2936, H2940, C2945, and C2948 each contribute to the Zn(2+) site. The RdRp catalytic domain maps to 3026–3178 (GIMYADDTAG…APLDERFGLA (153 aa)). The Zn(2+) site is built by H3213, C3229, and C3348.

In the N-terminal section; belongs to the class I-like SAM-binding methyltransferase superfamily. mRNA cap 0-1 NS5-type methyltransferase family. As to quaternary structure, homodimer. Interacts (via N-terminus) with host EXOC1 (via C-terminus); this interaction results in EXOC1 degradation through the proteasome degradation pathway. Forms heterodimers with envelope protein E in the endoplasmic reticulum and Golgi. In terms of assembly, homodimer; in the endoplasmic reticulum and Golgi. Interacts with protein prM. Interacts with non-structural protein 1. As to quaternary structure, homodimer; Homohexamer when secreted. Interacts with envelope protein E. NS1 interacts with NS4B. Interacts with host complement protein CFH; this interaction leads to the degradation of C3. Interacts (via N-terminus) with serine protease NS3. In terms of assembly, forms a heterodimer with serine protease NS3. May form homooligomers. As to quaternary structure, forms a heterodimer with NS2B. Interacts with non-structural protein 2A (via N-terminus). Interacts with NS4B. Interacts with unphosphorylated RNA-directed RNA polymerase NS5; this interaction stimulates RNA-directed RNA polymerase NS5 guanylyltransferase activity. NS3 interacts with host PDCD6IP; this interaction contributes to virion release. Interacts with serine protease NS3. In terms of assembly, homodimer. Interacts with host STAT2; this interaction prevents the establishment of cellular antiviral state. Interacts with serine protease NS3. Interacts with host TRIM23; this interaction leads to NS5 ubiquitination. Specific enzymatic cleavages in vivo yield mature proteins. The nascent capsid protein C contains a C-terminal hydrophobic domain that act as a signal sequence for translocation of prM into the lumen of the ER. Mature capsid protein C is cleaved at a site upstream of this hydrophobic domain by NS3. prM is cleaved in post-Golgi vesicles by a host furin, releasing the mature small envelope protein M, and peptide pr. Non-structural protein 2A-alpha, a C-terminally truncated form of non-structural protein 2A, results from partial cleavage by NS3. Specific enzymatic cleavages in vivo yield mature proteins peptide 2K acts as a signal sequence and is removed from the N-terminus of NS4B by the host signal peptidase in the ER lumen. Signal cleavage at the 2K-4B site requires a prior NS3 protease-mediated cleavage at the 4A-2K site. In terms of processing, cleaved in post-Golgi vesicles by a host furin, releasing the mature small envelope protein M, and peptide pr. This cleavage is incomplete as up to 30% of viral particles still carry uncleaved prM. Post-translationally, N-glycosylated. N-glycosylated. The excreted form is glycosylated and this is required for efficient secretion of the protein from infected cells. In terms of processing, polyubiquitinated; ubiquitination is probably mediated by host TRIM23 and is prerequisite for NS5-STAT2 interaction. NS5 is not ISGylated or sumoylated. Post-translationally, phosphorylated on serines residues. This phosphorylation may trigger NS5 nuclear localization.

Its subcellular location is the virion. It localises to the host nucleus. The protein localises to the host cytoplasm. It is found in the host perinuclear region. The protein resides in the virion membrane. Its subcellular location is the host endoplasmic reticulum membrane. It localises to the secreted. It carries out the reaction Selective hydrolysis of -Xaa-Xaa-|-Yaa- bonds in which each of the Xaa can be either Arg or Lys and Yaa can be either Ser or Ala.. The enzyme catalyses RNA(n) + a ribonucleoside 5'-triphosphate = RNA(n+1) + diphosphate. The catalysed reaction is a ribonucleoside 5'-triphosphate + H2O = a ribonucleoside 5'-diphosphate + phosphate + H(+). It catalyses the reaction ATP + H2O = ADP + phosphate + H(+). It carries out the reaction a 5'-end (5'-triphosphoguanosine)-ribonucleoside in mRNA + S-adenosyl-L-methionine = a 5'-end (N(7)-methyl 5'-triphosphoguanosine)-ribonucleoside in mRNA + S-adenosyl-L-homocysteine. The enzyme catalyses a 5'-end (N(7)-methyl 5'-triphosphoguanosine)-ribonucleoside in mRNA + S-adenosyl-L-methionine = a 5'-end (N(7)-methyl 5'-triphosphoguanosine)-(2'-O-methyl-ribonucleoside) in mRNA + S-adenosyl-L-homocysteine + H(+). In terms of biological role, plays a role in virus budding by binding to the cell membrane and gathering the viral RNA into a nucleocapsid that forms the core of a mature virus particle. During virus entry, may induce genome penetration into the host cytoplasm after hemifusion induced by the surface proteins. Can migrate to the cell nucleus where it modulates host functions. Its function is as follows. Inhibits RNA silencing by interfering with host Dicer. Functionally, prevents premature fusion activity of envelope proteins in trans-Golgi by binding to envelope protein E at pH6.0. After virion release in extracellular space, gets dissociated from E dimers. Acts as a chaperone for envelope protein E during intracellular virion assembly by masking and inactivating envelope protein E fusion peptide. prM is the only viral peptide matured by host furin in the trans-Golgi network probably to avoid catastrophic activation of the viral fusion activity in acidic Golgi compartment prior to virion release. prM-E cleavage is inefficient, and many virions are only partially matured. These uncleaved prM would play a role in immune evasion. In terms of biological role, may play a role in virus budding. Exerts cytotoxic effects by activating a mitochondrial apoptotic pathway through M ectodomain. May display a viroporin activity. Its function is as follows. Binds to host cell surface receptor and mediates fusion between viral and cellular membranes. Envelope protein is synthesized in the endoplasmic reticulum in the form of heterodimer with protein prM. They play a role in virion budding in the ER, and the newly formed immature particle is covered with 60 spikes composed of heterodimer between precursor prM and envelope protein E. The virion is transported to the Golgi apparatus where the low pH causes dissociation of PrM-E heterodimers and formation of E homodimers. prM-E cleavage is inefficient, and many virions are only partially matured. These uncleaved prM would play a role in immune evasion. Functionally, involved in immune evasion, pathogenesis and viral replication. Once cleaved off the polyprotein, is targeted to three destinations: the viral replication cycle, the plasma membrane and the extracellular compartment. Essential for viral replication. Required for formation of the replication complex and recruitment of other non-structural proteins to the ER-derived membrane structures. Excreted as a hexameric lipoparticle that plays a role against host immune response. Antagonizing the complement function. Binds to the host macrophages and dendritic cells. Inhibits signal transduction originating from Toll-like receptor 3 (TLR3). Component of the viral RNA replication complex that functions in virion assembly and antagonizes the host immune response. In terms of biological role, required cofactor for the serine protease function of NS3. May have membrane-destabilizing activity and form viroporins. Its function is as follows. Displays three enzymatic activities: serine protease, NTPase and RNA helicase. NS3 serine protease, in association with NS2B, performs its autocleavage and cleaves the polyprotein at dibasic sites in the cytoplasm: C-prM, NS2A-NS2B, NS2B-NS3, NS3-NS4A, NS4A-2K and NS4B-NS5. NS3 RNA helicase binds RNA and unwinds dsRNA in the 3' to 5' direction. Also plays a role in virus assembly. Functionally, regulates the ATPase activity of the NS3 helicase activity. NS4A allows NS3 helicase to conserve energy during unwinding. Functions as a signal peptide for NS4B and is required for the interferon antagonism activity of the latter. In terms of biological role, induces the formation of ER-derived membrane vesicles where the viral replication takes place. Inhibits interferon (IFN)-induced host STAT1 phosphorylation and nuclear translocation, thereby preventing the establishment of cellular antiviral state by blocking the IFN-alpha/beta pathway. Its function is as follows. Replicates the viral (+) and (-) RNA genome, and performs the capping of genomes in the cytoplasm. NS5 methylates viral RNA cap at guanine N-7 and ribose 2'-O positions. Besides its role in RNA genome replication, also prevents the establishment of cellular antiviral state by blocking the interferon-alpha/beta (IFN-alpha/beta) signaling pathway. IFN-I induces binding of NS5 to host IFN-activated transcription factor STAT2, preventing its transcriptional activity. Host TRIM23 is the E3 ligase that interacts with and polyubiquitinates NS5 to promote its binding to STAT2 and trigger IFN-I signaling inhibition. This is Genome polyprotein from Edge Hill virus (EHV).